The chain runs to 78 residues: Acyl carrier protein (78 aa).

The Carrier domain occupies 2–77 (SDIAERVKKI…DAIKFLEKNA (76 aa)). At serine 37 the chain carries O-(pantetheine 4'-phosphoryl)serine.

This sequence belongs to the acyl carrier protein (ACP) family. In terms of processing, 4'-phosphopantetheine is transferred from CoA to a specific serine of apo-ACP by AcpS. This modification is essential for activity because fatty acids are bound in thioester linkage to the sulfhydryl of the prosthetic group.

It is found in the cytoplasm. Its pathway is lipid metabolism; fatty acid biosynthesis. In terms of biological role, carrier of the growing fatty acid chain in fatty acid biosynthesis. This Xanthobacter autotrophicus (strain ATCC BAA-1158 / Py2) protein is Acyl carrier protein.